The chain runs to 190 residues: Peptidyl-tRNA hydrolase (190 aa).

Tyr14 contributes to the tRNA binding site. The active-site Proton acceptor is the His19. Residues Tyr64 and Asn66 each contribute to the tRNA site.

The protein belongs to the PTH family. In terms of assembly, monomer.

It is found in the cytoplasm. The enzyme catalyses an N-acyl-L-alpha-aminoacyl-tRNA + H2O = an N-acyl-L-amino acid + a tRNA + H(+). Its function is as follows. Hydrolyzes ribosome-free peptidyl-tRNAs (with 1 or more amino acids incorporated), which drop off the ribosome during protein synthesis, or as a result of ribosome stalling. Catalyzes the release of premature peptidyl moieties from peptidyl-tRNA molecules trapped in stalled 50S ribosomal subunits, and thus maintains levels of free tRNAs and 50S ribosomes. This is Peptidyl-tRNA hydrolase from Rhodopirellula baltica (strain DSM 10527 / NCIMB 13988 / SH1).